Reading from the N-terminus, the 233-residue chain is MADS-box transcription factor 56 (233 aa).

The MADS-box domain maps to 1–61 (MVRGRTELKR…GRLYEFASAP (61 aa)). The K-box domain maps to 87–177 (IQQVKDDTLG…RGKHRNLEAA (91 aa)).

The protein localises to the nucleus. In terms of biological role, probable transcription factor. The chain is MADS-box transcription factor 56 (MADS56) from Oryza sativa subsp. indica (Rice).